The chain runs to 519 residues: Chaperone SurA (519 aa).

The N-terminal stretch at 1-31 is a signal peptide; sequence MMRSLHSLRRMSGTVLALMLAAGLPLSAAQA. Low complexity-rich tracts occupy residues 31–45 and 197–207; these read AQPA…QKPA and PAAAQATRAPA. Disordered stretches follow at residues 31–50 and 196–221; these read AQPA…PAPS and NPAA…PAQS. The PpiC 1 domain occupies 223–324; it reads PAMLVLAQIL…NGFHILKVVD (102 aa). The disordered stretch occupies residues 328-361; the sequence is GGQPAQAARPAPAPAPQQPSSFQEGPSVAAPQGP. One can recognise a PpiC 2 domain in the interval 364–463; sequence VTQTHARHIL…FGWHLIQVLE (100 aa).

It is found in the periplasm. The catalysed reaction is [protein]-peptidylproline (omega=180) = [protein]-peptidylproline (omega=0). Functionally, chaperone involved in the correct folding and assembly of outer membrane proteins. Recognizes specific patterns of aromatic residues and the orientation of their side chains, which are found more frequently in integral outer membrane proteins. May act in both early periplasmic and late outer membrane-associated steps of protein maturation. This chain is Chaperone SurA, found in Bordetella bronchiseptica (strain ATCC BAA-588 / NCTC 13252 / RB50) (Alcaligenes bronchisepticus).